We begin with the raw amino-acid sequence, 301 residues long: Aspartate carbamoyltransferase catalytic subunit (301 aa).

2 residues coordinate carbamoyl phosphate: arginine 46 and threonine 47. An L-aspartate-binding site is contributed by lysine 74. Carbamoyl phosphate contacts are provided by arginine 96, histidine 124, and glutamine 127. Positions 157 and 208 each coordinate L-aspartate. The carbamoyl phosphate site is built by alanine 249 and proline 250.

Belongs to the aspartate/ornithine carbamoyltransferase superfamily. ATCase family. In terms of assembly, heterododecamer (2C3:3R2) of six catalytic PyrB chains organized as two trimers (C3), and six regulatory PyrI chains organized as three dimers (R2).

It catalyses the reaction carbamoyl phosphate + L-aspartate = N-carbamoyl-L-aspartate + phosphate + H(+). The protein operates within pyrimidine metabolism; UMP biosynthesis via de novo pathway; (S)-dihydroorotate from bicarbonate: step 2/3. In terms of biological role, catalyzes the condensation of carbamoyl phosphate and aspartate to form carbamoyl aspartate and inorganic phosphate, the committed step in the de novo pyrimidine nucleotide biosynthesis pathway. The sequence is that of Aspartate carbamoyltransferase catalytic subunit from Bacillus cereus (strain ATCC 14579 / DSM 31 / CCUG 7414 / JCM 2152 / NBRC 15305 / NCIMB 9373 / NCTC 2599 / NRRL B-3711).